The primary structure comprises 311 residues: Ribosomal RNA small subunit methyltransferase H (311 aa).

Residues 32–34 (AGH), aspartate 52, phenylalanine 79, aspartate 100, and glutamine 107 each bind S-adenosyl-L-methionine.

Belongs to the methyltransferase superfamily. RsmH family.

It is found in the cytoplasm. The catalysed reaction is cytidine(1402) in 16S rRNA + S-adenosyl-L-methionine = N(4)-methylcytidine(1402) in 16S rRNA + S-adenosyl-L-homocysteine + H(+). In terms of biological role, specifically methylates the N4 position of cytidine in position 1402 (C1402) of 16S rRNA. This Staphylococcus carnosus (strain TM300) protein is Ribosomal RNA small subunit methyltransferase H.